A 121-amino-acid polypeptide reads, in one-letter code: Putative viral protein-binding protein C1 (121 aa).

The segment at 21-57 is disordered; the sequence is PWDRTRGHPDVPWRNLTSSPTRPLAQPAGSCMPAEPS.

In terms of assembly, interacts with core protein of hepatitis B virus.

The protein is Putative viral protein-binding protein C1 of Homo sapiens (Human).